A 247-amino-acid polypeptide reads, in one-letter code: 3,4-dihydroxy-2-butanone 4-phosphate synthase (247 aa).

Residues 38-39, Asp-43, 179-183, and Glu-203 contribute to the D-ribulose 5-phosphate site; these read RE and RMGQT. Glu-39 contributes to the Mg(2+) binding site.

It belongs to the DHBP synthase family. In terms of assembly, homodimer. The cofactor is Mg(2+). It depends on Mn(2+) as a cofactor.

It catalyses the reaction D-ribulose 5-phosphate = (2S)-2-hydroxy-3-oxobutyl phosphate + formate + H(+). It functions in the pathway cofactor biosynthesis; riboflavin biosynthesis; 2-hydroxy-3-oxobutyl phosphate from D-ribulose 5-phosphate: step 1/1. Functionally, catalyzes the conversion of D-ribulose 5-phosphate to formate and 3,4-dihydroxy-2-butanone 4-phosphate. The chain is 3,4-dihydroxy-2-butanone 4-phosphate synthase from Methanosarcina mazei (strain ATCC BAA-159 / DSM 3647 / Goe1 / Go1 / JCM 11833 / OCM 88) (Methanosarcina frisia).